Here is a 796-residue protein sequence, read N- to C-terminus: MEEMEALVGVVPHSADCDLFKEPVRKRRRLHRDRQFQAFPSAEQSALKEYEKLECRTRRVLSNTYQKLIQSVFLDDSIPSGLKYLINRLLALIEKSPLEPVYVGFLGITGAGKSSLINALIRQAMFLPVSGESVCTSCIVQVSSGCCEQYEAKIHLLSDQEWKAELKDLTKLLHRAEQSGEEEADLWDRDDATEEAAQKLRMLYGHGAERRHYEELLRLKPRGRIPNSRTITLKAEEAGELSVKLDPYIRTRRRDWDGESAETQIWPLIKYVEVILPKSALIPEGVVLVDIPGTGDFNSKRDKMWKKTIDKCSVIWVISDIERVSGGKTHEDLLSESIKACQRGFCRDIALVVTKTDKLHLQEYLRERKMGNQAIQSQREAVLQRNEIIKLQRKRMLKEKLKRKLPADSKVLEASDLVYTVSAHEYWQRTILTEEESEIPKLREYIRKRILDKKRRLVTKYVTEAFGLLLLTDTLNTEESLLTEELNTGGLRQFVEEKMELLEKAIEQCFARMEQPLQTGVQVAMTSYRRILGSCLVRSRGNQGFHQTLKAVCLKNGVYASRTLARIDLNEALSQPIYDQIDPVFGGIFRDGKPTAPALMQHIDAFKHSLEERMAEVGVRSGWKQDGYKRSFLIQEISAILGGLESHILRRKRKIYKSVTSSIQNDLKPCYEEAAQITGKKACERMKDVIRRGVERQVAEGLFERAQERMWHQFRQLKHGITEKVKGSITTMLTLAAPQGVGLCKELADVRNEQKEMEKLYRSLREVAENAQLRRSMQDFLLRMSPSKAGPHGTKL.

Residue 107–114 (GITGAGKS) coordinates GTP. Coiled-coil stretches lie at residues 158-185 (SDQE…EEAD) and 742-776 (GLCK…LRRS).

It localises to the nucleus speckle. Functionally, nuclear GTPase found in germinal center B-cells, where it may inhibit function of the activation-induced cytidine deaminase AICDA. Reduces somatic hypermutation in B-cells which may enhance genome stability. In Mus musculus (Mouse), this protein is Nuclear GTPase SLIP-GC.